Reading from the N-terminus, the 1368-residue chain is Indole-3-acetaldehyde oxidase (1368 aa).

Residues 19–108 (TSLVFAINGQ…GCSITTSDGL (90 aa)) form the 2Fe-2S ferredoxin-type domain. [2Fe-2S] cluster-binding residues include Cys-60, Cys-65, and Cys-68. The FAD-binding PCMH-type domain occupies 246-427 (LHSRKYRWSS…LSLEIPSWHS (182 aa)).

It belongs to the xanthine dehydrogenase family. Aldehyde oxidases (AO) are homodimers and heterodimers of AO subunits. AO-alpha is an AAO1 homodimer; AO-beta is an AAO1-AAO2 heterodimer. The cofactor is [2Fe-2S] cluster. Requires FAD as cofactor. Mo-molybdopterin is required as a cofactor. In terms of tissue distribution, predominantly expressed in roots, seedlings, mature siliques and seeds, and to lower extent in stems and rosettes. In seedlings, mostly expressed in lower part of hypocotyls and roots.

The protein localises to the cytoplasm. It catalyses the reaction indole-3-acetaldehyde + O2 + H2O = (indol-3-yl)acetate + H2O2 + H(+). With respect to regulation, strongly inhibited by iodoacetate and potassium cyanide (KCN). Weakly inhibited by 2-mercaptoethanol, dithiothreitol (DTT), menadione, estradiol, 4'-(9-acridinylamino)methanesulfon-m-anisidine (mAMSA), allopurinol and tritonX-100. Not affected by p-chloromercuribenzoate. Its function is as follows. In higher plants aldehyde oxidases (AO) appear to be homo- and heterodimeric assemblies of AO subunits with probably different physiological functions. AO-alpha may be involved in the biosynthesis of auxin, and in biosynthesis of abscisic acid (ABA) in seeds. In vitro, AO-alpha uses heptaldehyde, protocatechualdehyde, benzaldehyde, indole-3-aldehyde (IAld), indole-3-acetaldehyde (IAAld), cinnamaldehyde and citral as substrates; AO-beta uses IAAld, IAld and naphtaldehyde as substrates. The polypeptide is Indole-3-acetaldehyde oxidase (AAO1) (Arabidopsis thaliana (Mouse-ear cress)).